A 279-amino-acid chain; its full sequence is NAD kinase (279 aa).

D57 functions as the Proton acceptor in the catalytic mechanism. NAD(+)-binding positions include 57 to 58, 133 to 134, R159, D161, and 172 to 177; these read DG, NE, and TAYNKS.

The protein belongs to the NAD kinase family. A divalent metal cation is required as a cofactor.

The protein resides in the cytoplasm. The enzyme catalyses NAD(+) + ATP = ADP + NADP(+) + H(+). In terms of biological role, involved in the regulation of the intracellular balance of NAD and NADP, and is a key enzyme in the biosynthesis of NADP. Catalyzes specifically the phosphorylation on 2'-hydroxyl of the adenosine moiety of NAD to yield NADP. The protein is NAD kinase of Streptococcus pyogenes serotype M12 (strain MGAS2096).